Here is a 127-residue protein sequence, read N- to C-terminus: Fluoride-specific ion channel FluC (127 aa).

The next 4 membrane-spanning stretches (helical) occupy residues 3-23 (LVFL…YFVG), 38-58 (LGTF…GHLA), 67-87 (FGIF…SYGL), and 102-122 (ISYV…GWFL). 2 residues coordinate Na(+): Gly-77 and Thr-80.

Belongs to the fluoride channel Fluc/FEX (TC 1.A.43) family.

It localises to the cell inner membrane. The catalysed reaction is fluoride(in) = fluoride(out). Its activity is regulated as follows. Na(+) is not transported, but it plays an essential structural role and its presence is essential for fluoride channel function. Fluoride-specific ion channel. Important for reducing fluoride concentration in the cell, thus reducing its toxicity. This chain is Fluoride-specific ion channel FluC, found in Helicobacter acinonychis (strain Sheeba).